The primary structure comprises 425 residues: uncharacterized protein (425 aa).

12 consecutive transmembrane segments (helical) span residues 15 to 35 (LICA…SQML), 48 to 68 (LIGA…WAPL), 84 to 104 (MLLS…FDPL), 107 to 127 (LGTV…QDIV), 149 to 169 (INAY…LAAI), 174 to 194 (TVFL…LFLA), 225 to 245 (VIQA…DSFA), 271 to 291 (ALWS…KLGI), 295 to 315 (LWLF…LAAF), 331 to 351 (VVIA…VAFM), 370 to 390 (LSAL…GAVG), and 395 to 415 (FWFC…VAPL).

This sequence to E.coli AmpG and yeast YBR220c.

It is found in the cell inner membrane. This is an uncharacterized protein from Haemophilus influenzae (strain ATCC 51907 / DSM 11121 / KW20 / Rd).